The sequence spans 694 residues: MSDQEFGLDAIRNIGIMAHIDAGKTTTTERILFYAGRTHKIGEVHEGGATMDWMEQEQERGITITSAATTVFWLGAKINIIDTPGHVDFTIEVERSLRVLDGAVAVFDAVSGVEPQSETVWRQANKYGVPRIAFVNKMDRMGANYFGAIESMREKLGANAIPVHCPIGSESQFVGMVDLISQKTLYFLEETLGAKWEEREIPEDLQEQCATLRMQLLEELATVDESNEAFMEKVLENPDSITEEEIHTVMRKGVIEGKINPVLCGSAFKNKGVQQLLDVIVKWLPSPLDRGNVRGINLKTGEEVSLKPSKDGPLAALAFKIMTDPYVGRITFIRIYSGTLKKGSAILNSTKDKKERISRLLEMHANERTDRDEFTVGDIGACVGLKFSVTGDTLCDENQEIVLERIEAPEPVIDMAIEPKSKGDREKLAQALSALSEEDPTFRVSTNEETGQTIISGMGELHLDILRDRMIREFRVEANVGKPQVSYKETITKTSNSETKYVKQSGGRGQYAHVCLEIEPNEPGKGNEVVSKIVGGVIPKEYIPAVIKGVEEGLNSGVLAGYGLVDVKVSIVFGSYHEVDSSEMAFKICGSMAVKEACRKALPVILEPIMKVTVITPEDHLGDVIGDLNRRRGKILGQESSRNMAQVSAEVPLSEMFGYMTSLRSLTSGRATSTMEPAFFAKVPQKIQEEIVKK.

Residues 9-288 (DAIRNIGIMA…VIVKWLPSPL (280 aa)) enclose the tr-type G domain. GTP is bound by residues 18–25 (AHIDAGKT), 82–86 (DTPGH), and 136–139 (NKMD).

Belongs to the TRAFAC class translation factor GTPase superfamily. Classic translation factor GTPase family. EF-G/EF-2 subfamily.

Its subcellular location is the cytoplasm. In terms of biological role, catalyzes the GTP-dependent ribosomal translocation step during translation elongation. During this step, the ribosome changes from the pre-translocational (PRE) to the post-translocational (POST) state as the newly formed A-site-bound peptidyl-tRNA and P-site-bound deacylated tRNA move to the P and E sites, respectively. Catalyzes the coordinated movement of the two tRNA molecules, the mRNA and conformational changes in the ribosome. This Chlamydia trachomatis serovar A (strain ATCC VR-571B / DSM 19440 / HAR-13) protein is Elongation factor G.